Consider the following 254-residue polypeptide: MATTNVEENKQTQEQQPKEIKHQEVGHKSLLQSDALFQYILETSVYPREPEPMKELRDITAKHPWNLMTTSADEGQFLNMLLKLINAKNTIEIGVYTGYSLLASALALPDDGKILAMDINRENYELGLPVIQKAGVAHKIDFREGPALPVLDLLIEDAKNHGSFDFAFVDADKDNYGNYHKRLIDLVKIGGVIGYDNTLWNGSVAAPADAPMRKYVRYYRDFVMEFNKAIAADPRVEICQLPVGDGITLCRRIS.

The disordered stretch occupies residues 1–25 (MATTNVEENKQTQEQQPKEIKHQEV). Over residues 7–25 (EENKQTQEQQPKEIKHQEV) the composition is skewed to basic and acidic residues. Position 28 (lysine 28) interacts with substrate. S-adenosyl-L-methionine-binding positions include threonine 70, glutamate 92, 94-95 (GV), serine 100, aspartate 118, and alanine 147. A substrate-binding site is contributed by aspartate 170. Residue aspartate 170 participates in a divalent metal cation binding. Aspartate 172 contributes to the S-adenosyl-L-methionine binding site. Residues aspartate 196 and asparagine 197 each contribute to the a divalent metal cation site. Asparagine 201 lines the substrate pocket.

Belongs to the class I-like SAM-binding methyltransferase superfamily. Cation-dependent O-methyltransferase family. CCoAMT subfamily. The cofactor is a divalent metal cation.

The enzyme catalyses (E)-caffeoyl-CoA + S-adenosyl-L-methionine = (E)-feruloyl-CoA + S-adenosyl-L-homocysteine + H(+). It participates in aromatic compound metabolism; phenylpropanoid biosynthesis. Methylates caffeoyl-CoA to feruloyl-CoA and 5-hydroxyferuloyl-CoA to sinapoyl-CoA. Plays a role in the synthesis of feruloylated polysaccharides. Involved in the reinforcement of the plant cell wall. Also involved in the responding to wounding or pathogen challenge by the increased formation of cell wall-bound ferulic acid polymers. In Mesembryanthemum crystallinum (Common ice plant), this protein is Caffeoyl-CoA O-methyltransferase.